The sequence spans 324 residues: 2-dehydro-3-deoxygluconokinase (324 aa).

Substrate is bound by residues 35-39 (GAESN), 106-108 (YYR), and Arg-170. ATP is bound by residues 168-170 (NVR), 228-233 (KLGKEG), and 258-261 (GAGD). Positions 261 and 297 each coordinate substrate. Catalysis depends on Asp-261, which acts as the Proton acceptor.

Belongs to the carbohydrate kinase PfkB family.

The enzyme catalyses 2-dehydro-3-deoxy-D-gluconate + ATP = 2-dehydro-3-deoxy-6-phospho-D-gluconate + ADP + H(+). The protein operates within carbohydrate acid metabolism; 2-dehydro-3-deoxy-D-gluconate degradation; D-glyceraldehyde 3-phosphate and pyruvate from 2-dehydro-3-deoxy-D-gluconate: step 1/2. Catalyzes the phosphorylation of 2-keto-3-deoxygluconate (KDG) to produce 2-keto-3-deoxy-6-phosphogluconate (KDPG). This chain is 2-dehydro-3-deoxygluconokinase (kdgK), found in Bacillus subtilis (strain 168).